A 280-amino-acid polypeptide reads, in one-letter code: Virginiamycin B lyase (280 aa).

His215 serves as a coordination point for substrate. Mg(2+) is bound at residue Glu254. His256 serves as the catalytic Proton acceptor. Residue Glu271 participates in Mg(2+) binding.

It belongs to the Vgb family. In terms of assembly, monomer. Requires Mg(2+) as cofactor.

Its function is as follows. Inactivates the type B streptogramin antibiotics by linearizing the lactone ring at the ester linkage, generating a free phenylglycine carboxylate and converting the threonyl moiety into 2-amino-butenoic acid. This is Virginiamycin B lyase from Mycobacterium sp. (strain KMS).